The primary structure comprises 316 residues: 4-hydroxy-3-methylbut-2-enyl diphosphate reductase (316 aa).

C12 contacts [4Fe-4S] cluster. (2E)-4-hydroxy-3-methylbut-2-enyl diphosphate contacts are provided by H41 and H74. Residues H41 and H74 each contribute to the dimethylallyl diphosphate site. 2 residues coordinate isopentenyl diphosphate: H41 and H74. [4Fe-4S] cluster is bound at residue C96. H124 is a binding site for (2E)-4-hydroxy-3-methylbut-2-enyl diphosphate. H124 contributes to the dimethylallyl diphosphate binding site. An isopentenyl diphosphate-binding site is contributed by H124. The active-site Proton donor is the E126. Residue T167 participates in (2E)-4-hydroxy-3-methylbut-2-enyl diphosphate binding. C197 lines the [4Fe-4S] cluster pocket. Positions 225, 226, 227, and 269 each coordinate (2E)-4-hydroxy-3-methylbut-2-enyl diphosphate. Dimethylallyl diphosphate-binding residues include S225, S226, N227, and S269. The isopentenyl diphosphate site is built by S225, S226, N227, and S269.

The protein belongs to the IspH family. Homodimer. The cofactor is [4Fe-4S] cluster.

The enzyme catalyses isopentenyl diphosphate + 2 oxidized [2Fe-2S]-[ferredoxin] + H2O = (2E)-4-hydroxy-3-methylbut-2-enyl diphosphate + 2 reduced [2Fe-2S]-[ferredoxin] + 2 H(+). It carries out the reaction dimethylallyl diphosphate + 2 oxidized [2Fe-2S]-[ferredoxin] + H2O = (2E)-4-hydroxy-3-methylbut-2-enyl diphosphate + 2 reduced [2Fe-2S]-[ferredoxin] + 2 H(+). It participates in isoprenoid biosynthesis; dimethylallyl diphosphate biosynthesis; dimethylallyl diphosphate from (2E)-4-hydroxy-3-methylbutenyl diphosphate: step 1/1. The protein operates within isoprenoid biosynthesis; isopentenyl diphosphate biosynthesis via DXP pathway; isopentenyl diphosphate from 1-deoxy-D-xylulose 5-phosphate: step 6/6. Functionally, catalyzes the conversion of 1-hydroxy-2-methyl-2-(E)-butenyl 4-diphosphate (HMBPP) into a mixture of isopentenyl diphosphate (IPP) and dimethylallyl diphosphate (DMAPP). Acts in the terminal step of the DOXP/MEP pathway for isoprenoid precursor biosynthesis. The polypeptide is 4-hydroxy-3-methylbut-2-enyl diphosphate reductase (Escherichia coli (strain UTI89 / UPEC)).